A 133-amino-acid chain; its full sequence is UPF0225 protein BB3385 (133 aa).

The protein belongs to the UPF0225 family.

In Bordetella bronchiseptica (strain ATCC BAA-588 / NCTC 13252 / RB50) (Alcaligenes bronchisepticus), this protein is UPF0225 protein BB3385.